Consider the following 499-residue polypeptide: Lysine--tRNA ligase (499 aa).

Positions 409 and 416 each coordinate Mg(2+).

It belongs to the class-II aminoacyl-tRNA synthetase family. Homodimer. Mg(2+) is required as a cofactor.

It localises to the cytoplasm. It carries out the reaction tRNA(Lys) + L-lysine + ATP = L-lysyl-tRNA(Lys) + AMP + diphosphate. This is Lysine--tRNA ligase from Thioalkalivibrio sulfidiphilus (strain HL-EbGR7).